A 160-amino-acid chain; its full sequence is Prorelaxin (160 aa).

3 disulfide bridges follow: cysteine 10–cysteine 147, cysteine 22–cysteine 160, and cysteine 146–cysteine 151. Residues 34–133 (QEKQRILGSG…KDFNLNIYSP (100 aa)) constitute a propeptide, connecting peptide.

This sequence belongs to the insulin family. As to quaternary structure, heterodimer of a B chain and an A chain linked by two disulfide bonds. In terms of tissue distribution, expressed in the endometrium during pregnancy and in mammary gland during lactation.

The protein resides in the secreted. Functionally, relaxin is an ovarian hormone that acts with estrogen to produce dilatation of the birth canal in many mammals. It bears mature young, and allows separation of the pelvic bones. This chain is Prorelaxin (RLN), found in Cavia porcellus (Guinea pig).